A 288-amino-acid chain; its full sequence is Aquaporin PIP1-5 (288 aa).

A disordered region spans residues 1 to 36 (MEGKEEDVRLGANRYSERQPIGTAAQGTEEKDYKEP). 2 consecutive transmembrane segments (helical) span residues 57–77 (IAEFVATFLFLYISILTVMGV) and 92–114 (IAWSFGGMIFALVYCTAGISGGH). An NPA 1 motif is present at residues 116–118 (NPA). 3 helical membrane-spanning segments follow: residues 135-155 (LFYMVMQCLGAICGAGVVKGF), 177-197 (GDGLGAEIVGTFVLVYTVFSA), and 211-231 (ILAPLPIGFAVFLVHLATIPI). Residues 237 to 239 (NPA) carry the NPA 2 motif. A helical transmembrane segment spans residues 259 to 279 (IFWVGPFIGAALAAIYHVVII).

Belongs to the MIP/aquaporin (TC 1.A.8) family. PIP (TC 1.A.8.11) subfamily. In terms of tissue distribution, highly expressed in roots and at lower levels in anthers and silks.

The protein resides in the cell membrane. Functionally, water channel required to facilitate the transport of water across cell membrane. The protein is Aquaporin PIP1-5 (PIP1-5) of Zea mays (Maize).